Consider the following 455-residue polypeptide: uncharacterized protein (455 aa).

Residues 1–20 show a composition bias toward low complexity; the sequence is MGCCLSKKPSPSLPSSVKPS. Disordered stretches follow at residues 1 to 234 and 258 to 304; these read MGCC…IPAT and RIAA…QNTK. Composition is skewed to basic and acidic residues over residues 35-46, 61-75, 129-143, 156-166, and 173-186; these read EEAKPKSEKLNQ, SHEERSKKTESDKDS, RSFDFDQNERIRGGD, RGVERVHGSPR, and PSRERERSGSRERG. Residues 213–224 show a composition bias toward polar residues; that stretch reads SCGSSVNSSNNR. A compositionally biased stretch (low complexity) spans 260–271; that stretch reads AASPRSKSPARA.

This is an uncharacterized protein from Arabidopsis thaliana (Mouse-ear cress).